The chain runs to 460 residues: Probable glucan endo-1,3-beta-glucosidase eglC (460 aa).

The N-terminal stretch at 1-18 (MQLAQLAAFAMTLATSEA) is a signal peptide. Residue Glu-128 is the Proton donor of the active site. An N-linked (GlcNAc...) asparagine glycan is attached at Asn-183. Glu-239 functions as the Nucleophile in the catalytic mechanism. Residues Asn-312, Asn-367, and Asn-373 are each glycosylated (N-linked (GlcNAc...) asparagine). The segment at 379-437 (RPSGSASARPSAGAISSGSGSSSSGSGSSGSTGTSATSGQSSSSGSSAAAGSSSPAAFS) is disordered. The segment covering 380–437 (PSGSASARPSAGAISSGSGSSSSGSGSSGSTGTSATSGQSSSSGSSAAAGSSSPAAFS) has biased composition (low complexity). The GPI-anchor amidated serine moiety is linked to residue Ser-430. A propeptide spans 431 to 460 (SSPAAFSGASTLSGSLFGAVVAVFMTLAAL) (removed in mature form).

Belongs to the glycosyl hydrolase 17 family. In terms of processing, the GPI-anchor is attached to the protein in the endoplasmic reticulum and serves to target the protein to the cell surface. There, the glucosamine-inositol phospholipid moiety is cleaved off and the GPI-modified mannoprotein is covalently attached via its lipidless GPI glycan remnant to the 1,6-beta-glucan of the outer cell wall layer.

It is found in the cell membrane. The protein localises to the secreted. The protein resides in the cell wall. It carries out the reaction Hydrolysis of (1-&gt;3)-beta-D-glucosidic linkages in (1-&gt;3)-beta-D-glucans.. In terms of biological role, glucanases play a role in cell expansion during growth, in cell-cell fusion during mating, and in spore release during sporulation. This enzyme may be involved in beta-glucan degradation and also function biosynthetically as a transglycosylase. The polypeptide is Probable glucan endo-1,3-beta-glucosidase eglC (eglC) (Aspergillus niger (strain ATCC MYA-4892 / CBS 513.88 / FGSC A1513)).